The primary structure comprises 196 residues: Peptide deformylase (196 aa).

Residues cysteine 103 and histidine 145 each coordinate Fe cation. Glutamate 146 is an active-site residue. Residue histidine 149 coordinates Fe cation.

This sequence belongs to the polypeptide deformylase family. Requires Fe(2+) as cofactor.

The catalysed reaction is N-terminal N-formyl-L-methionyl-[peptide] + H2O = N-terminal L-methionyl-[peptide] + formate. Its function is as follows. Removes the formyl group from the N-terminal Met of newly synthesized proteins. Requires at least a dipeptide for an efficient rate of reaction. N-terminal L-methionine is a prerequisite for activity but the enzyme has broad specificity at other positions. The protein is Peptide deformylase of Rhodococcus opacus (strain B4).